A 143-amino-acid chain; its full sequence is 3-hydroxyacyl-[acyl-carrier-protein] dehydratase FabZ (143 aa).

Histidine 47 is an active-site residue.

The protein belongs to the thioester dehydratase family. FabZ subfamily.

Its subcellular location is the cytoplasm. It catalyses the reaction a (3R)-hydroxyacyl-[ACP] = a (2E)-enoyl-[ACP] + H2O. Functionally, involved in unsaturated fatty acids biosynthesis. Catalyzes the dehydration of short chain beta-hydroxyacyl-ACPs and long chain saturated and unsaturated beta-hydroxyacyl-ACPs. The sequence is that of 3-hydroxyacyl-[acyl-carrier-protein] dehydratase FabZ from Moorella thermoacetica (strain ATCC 39073 / JCM 9320).